Here is a 146-residue protein sequence, read N- to C-terminus: ATP synthase epsilon chain (146 aa).

The protein belongs to the ATPase epsilon chain family. F-type ATPases have 2 components, CF(1) - the catalytic core - and CF(0) - the membrane proton channel. CF(1) has five subunits: alpha(3), beta(3), gamma(1), delta(1), epsilon(1). CF(0) has three main subunits: a, b and c.

The protein resides in the cell inner membrane. Functionally, produces ATP from ADP in the presence of a proton gradient across the membrane. This is ATP synthase epsilon chain from Rhodospirillum centenum (strain ATCC 51521 / SW).